Consider the following 2073-residue polypeptide: Fatty acid synthase subunit beta (2073 aa).

Residues 1–459 are acetyltransferase; the sequence is MVEAEQVHQS…VYSTDDAGDL (459 aa). S270 serves as the catalytic For acetyltransferase activity. The tract at residues 470–858 is enoyl reductase; it reads ALAVMITEKV…TRGIMFWKEL (389 aa). S1122 carries the post-translational modification Phosphoserine. A dehydratase region spans residues 1155 to 1644; that stretch reads GPEYTWFRAI…LPNTELITKL (490 aa). Catalysis depends on H1361, which acts as the For dehydratase activity. Residues 1558–1667 enclose the MaoC-like domain; that stretch reads PVFVTPPTNS…VEVLNQETSE (110 aa). The tract at residues 1645–2073 is malonyl/palmitoyl transferase; that stretch reads SHTGMINGRK…LQNWDEYESS (429 aa). The For malonyltransferase activity role is filled by S1828. The residue at position 2073 (S2073) is a Phosphoserine.

Belongs to the fungal fatty acid synthetase subunit beta family. As to quaternary structure, [Alpha(6)beta(6)] hexamers of two multifunctional subunits (alpha and beta).

It catalyses the reaction acetyl-CoA + n malonyl-CoA + 2n NADPH + 4n H(+) = a long-chain-acyl-CoA + n CoA + n CO2 + 2n NADP(+).. It carries out the reaction holo-[ACP] + acetyl-CoA = acetyl-[ACP] + CoA. The catalysed reaction is holo-[ACP] + malonyl-CoA = malonyl-[ACP] + CoA. The enzyme catalyses a (3R)-hydroxyacyl-[ACP] = a (2E)-enoyl-[ACP] + H2O. It catalyses the reaction a 2,3-saturated acyl-[ACP] + NAD(+) = a (2E)-enoyl-[ACP] + NADH + H(+). It carries out the reaction (9Z)-octadecenoyl-[ACP] + H2O = (9Z)-octadecenoate + holo-[ACP] + H(+). Functionally, fatty acid synthetase catalyzes the formation of long-chain fatty acids from acetyl-CoA, malonyl-CoA and NADPH. The beta subunit contains domains for: [acyl-carrier-protein] acetyltransferase and malonyltransferase, S-acyl fatty acid synthase thioesterase, enoyl-[acyl-carrier-protein] reductase, and 3-hydroxypalmitoyl-[acyl-carrier-protein] dehydratase. This Schizosaccharomyces pombe (strain 972 / ATCC 24843) (Fission yeast) protein is Fatty acid synthase subunit beta (fas1).